The sequence spans 242 residues: Polycomb group RING finger protein 3 (242 aa).

The RING-type zinc-finger motif lies at 17 to 56 (CRLCNGYLIDATTVTECLHTFCRSCLVKYLEENNTCPTCR). A disordered region spans residues 120–149 (EAHRNGETKTDEHTHKEPPEEKQEEDHDYH).

In terms of assembly, component of a PRC1-like complex.

Its subcellular location is the nucleus. Functionally, component of a Polycomb group (PcG) multiprotein PRC1-like complex, a complex class required to maintain the transcriptionally repressive state of many genes, including Hox genes, throughout development. PcG PRC1 complex acts via chromatin remodeling and modification of histones; it mediates monoubiquitination of histone H2A 'Lys-119', rendering chromatin heritably changed in its expressibility. Within the PRC1-like complex, regulates RNF2 ubiquitin ligase activity. This is Polycomb group RING finger protein 3 (pcgf3) from Xenopus tropicalis (Western clawed frog).